The following is a 407-amino-acid chain: 1-deoxy-D-xylulose 5-phosphate reductoisomerase (407 aa).

NADPH-binding residues include threonine 25, glycine 26, serine 27, isoleucine 28, asparagine 53, and asparagine 136. Lysine 137 lines the 1-deoxy-D-xylulose 5-phosphate pocket. Glutamate 138 is an NADPH binding site. Aspartate 162 lines the Mn(2+) pocket. Residues serine 163, glutamate 164, serine 188, and histidine 211 each coordinate 1-deoxy-D-xylulose 5-phosphate. Residue glutamate 164 coordinates Mn(2+). Glycine 217 contacts NADPH. 1-deoxy-D-xylulose 5-phosphate-binding residues include serine 224, asparagine 229, lysine 230, and glutamate 233. Residue glutamate 233 coordinates Mn(2+).

The protein belongs to the DXR family. The cofactor is Mg(2+). Mn(2+) is required as a cofactor.

The catalysed reaction is 2-C-methyl-D-erythritol 4-phosphate + NADP(+) = 1-deoxy-D-xylulose 5-phosphate + NADPH + H(+). It participates in isoprenoid biosynthesis; isopentenyl diphosphate biosynthesis via DXP pathway; isopentenyl diphosphate from 1-deoxy-D-xylulose 5-phosphate: step 1/6. Catalyzes the NADPH-dependent rearrangement and reduction of 1-deoxy-D-xylulose-5-phosphate (DXP) to 2-C-methyl-D-erythritol 4-phosphate (MEP). The polypeptide is 1-deoxy-D-xylulose 5-phosphate reductoisomerase (Rhodopseudomonas palustris (strain BisA53)).